An 83-amino-acid polypeptide reads, in one-letter code: Apolipoprotein C-I (83 aa).

The first 26 residues, 1–26 (MRLILSLPVLAVVLAMVLEGPAPAQA), serve as a signal peptide directing secretion.

The protein belongs to the apolipoprotein C1 family.

The protein localises to the secreted. Inhibitor of lipoprotein binding to the low density lipoprotein (LDL) receptor, LDL receptor-related protein, and very low density lipoprotein (VLDL) receptor. Associates with high density lipoproteins (HDL) and the triacylglycerol-rich lipoproteins in the plasma and makes up about 10% of the protein of the VLDL and 2% of that of HDL. Appears to interfere directly with fatty acid uptake and is also the major plasma inhibitor of cholesteryl ester transfer protein (CETP). Binds free fatty acids and reduces their intracellular esterification. Modulates the interaction of APOE with beta-migrating VLDL and inhibits binding of beta-VLDL to the LDL receptor-related protein. The sequence is that of Apolipoprotein C-I (APOC1) from Rousettus aegyptiacus (Egyptian fruit bat).